A 225-amino-acid chain; its full sequence is Uracil-DNA glycosylase (225 aa).

The active-site Proton acceptor is the Asp-68.

This sequence belongs to the uracil-DNA glycosylase (UDG) superfamily. UNG family.

The protein resides in the cytoplasm. It carries out the reaction Hydrolyzes single-stranded DNA or mismatched double-stranded DNA and polynucleotides, releasing free uracil.. Its function is as follows. Excises uracil residues from the DNA which can arise as a result of misincorporation of dUMP residues by DNA polymerase or due to deamination of cytosine. This chain is Uracil-DNA glycosylase, found in Parafrankia sp. (strain EAN1pec).